Here is a 107-residue protein sequence, read N- to C-terminus: Essential MCU regulator, mitochondrial (107 aa).

The transit peptide at 1–47 (MASGAARWLALVRVGSGASRSWLSLRKGGDVSAGRSCSGQSLVPTRS) directs the protein to the mitochondrion. Over 48-65 (VIVTRSGAILPKPVKMSF) the chain is Mitochondrial matrix. The helical transmembrane segment at 66-85 (GLLRVFSIVIPFLYVGTLIS) threads the bilayer. A GXXXX[G/A/S] motif is present at residues 81 to 85 (GTLIS). The Mitochondrial intermembrane segment spans residues 86 to 107 (KNFAALLEEHDIFVPEDDDDDD).

The protein belongs to the SMDT1/EMRE family. Component of the uniplex complex, composed of MCU, EMRE/SMDT1, MICU1 and MICU2 (or MICU3) in a 4:4:1:1 stoichiometry. The number of EMRE/SMDT1 molecules is hovewer variable, ranging from 1 to 4 copies per uniplex complex, leading to uniplex complexes with distinct gatekeeping profiles. Interacts (via its C-terminal poly-Asp tail) with MCUR1; the interaction is direct. Unprocessed form interacts (via transit peptide) with MAIP1. In terms of processing, undergoes proteolytic degradation in neurons: degraded by AFG3L2 and SPG7 before SMDT1/EMRE assembly with the uniporter complex, limiting the availability of SMDT1/EMRE for MCU assembly and promoting efficient assembly of gatekeeper subunits with MCU.

The protein resides in the mitochondrion inner membrane. Functionally, essential regulatory subunit of the mitochondrial calcium uniporter complex (uniplex), a complex that mediates calcium uptake into mitochondria. Required to bridge the calcium-sensing proteins MICU1 with the calcium-conducting subunit MCU. Acts by mediating activation of MCU and retention of MICU1 to the MCU pore, in order to ensure tight regulation of the uniplex complex and appropriate responses to intracellular calcium signaling. This is Essential MCU regulator, mitochondrial from Bos taurus (Bovine).